A 947-amino-acid chain; its full sequence is Translation initiation factor IF-2 (947 aa).

Residues 47–332 are disordered; that stretch reads LRESFGGGKS…RGRKSKRAKR (286 aa). The span at 86 to 95 shows a compositional bias: basic and acidic residues; sequence APDRSLDAAL. Positions 105–123 are enriched in pro residues; the sequence is APVPAPAPAPTPAPAPAPA. Residues 131–145 are compositionally biased toward low complexity; sequence APPAATPAAPAASAA. Pro residues-rich tracts occupy residues 146–171 and 210–225; these read PAPPKAPLPGQRPAPTPGKPAAPQAP and PRPQAPRPGAPRPGAP. The segment covering 255–318 has biased composition (gly residues); it reads RPGGGRPGGP…GAAGAFGRPG (64 aa). Residues 322–331 show a composition bias toward basic residues; it reads RRGRKSKRAK. The tr-type G domain occupies 443 to 614; the sequence is TRPPVVTVMG…AVLLTADAAL (172 aa). Positions 452–459 are G1; the sequence is GHVDHGKT. 452–459 provides a ligand contact to GTP; it reads GHVDHGKT. A G2 region spans residues 477 to 481; that stretch reads GITQH. The segment at 502–505 is G3; it reads DTPG. Residues 502–506 and 556–559 contribute to the GTP site; these read DTPGH and NKID. Residues 556–559 are G4; that stretch reads NKID. Residues 592 to 594 are G5; sequence SAK.

Belongs to the TRAFAC class translation factor GTPase superfamily. Classic translation factor GTPase family. IF-2 subfamily.

It is found in the cytoplasm. Its function is as follows. One of the essential components for the initiation of protein synthesis. Protects formylmethionyl-tRNA from spontaneous hydrolysis and promotes its binding to the 30S ribosomal subunits. Also involved in the hydrolysis of GTP during the formation of the 70S ribosomal complex. This Mycobacterium marinum (strain ATCC BAA-535 / M) protein is Translation initiation factor IF-2.